Here is a 328-residue protein sequence, read N- to C-terminus: Tetraacyldisaccharide 4'-kinase (328 aa).

Thr55–Thr62 contributes to the ATP binding site.

Belongs to the LpxK family.

The enzyme catalyses a lipid A disaccharide + ATP = a lipid IVA + ADP + H(+). The protein operates within glycolipid biosynthesis; lipid IV(A) biosynthesis; lipid IV(A) from (3R)-3-hydroxytetradecanoyl-[acyl-carrier-protein] and UDP-N-acetyl-alpha-D-glucosamine: step 6/6. Functionally, transfers the gamma-phosphate of ATP to the 4'-position of a tetraacyldisaccharide 1-phosphate intermediate (termed DS-1-P) to form tetraacyldisaccharide 1,4'-bis-phosphate (lipid IVA). This is Tetraacyldisaccharide 4'-kinase from Escherichia coli O139:H28 (strain E24377A / ETEC).